A 204-amino-acid polypeptide reads, in one-letter code: Urease accessory protein UreG (204 aa).

A GTP-binding site is contributed by 12–19 (GPVGSGKT).

This sequence belongs to the SIMIBI class G3E GTPase family. UreG subfamily. In terms of assembly, homodimer. UreD, UreF and UreG form a complex that acts as a GTP-hydrolysis-dependent molecular chaperone, activating the urease apoprotein by helping to assemble the nickel containing metallocenter of UreC. The UreE protein probably delivers the nickel.

The protein resides in the cytoplasm. Facilitates the functional incorporation of the urease nickel metallocenter. This process requires GTP hydrolysis, probably effectuated by UreG. This Pseudomonas aeruginosa (strain LESB58) protein is Urease accessory protein UreG.